A 182-amino-acid polypeptide reads, in one-letter code: ATP-dependent protease subunit HslV (182 aa).

The active site involves threonine 2. The Na(+) site is built by glycine 157, cysteine 160, and threonine 163.

The protein belongs to the peptidase T1B family. HslV subfamily. A double ring-shaped homohexamer of HslV is capped on each side by a ring-shaped HslU homohexamer. The assembly of the HslU/HslV complex is dependent on binding of ATP.

It is found in the cytoplasm. The enzyme catalyses ATP-dependent cleavage of peptide bonds with broad specificity.. Allosterically activated by HslU binding. Functionally, protease subunit of a proteasome-like degradation complex believed to be a general protein degrading machinery. In Sodalis glossinidius (strain morsitans), this protein is ATP-dependent protease subunit HslV.